Here is a 454-residue protein sequence, read N- to C-terminus: Pyrrolysine--tRNA ligase (454 aa).

The tract at residues 102–138 is disordered; the sequence is TRTKKAMPKSVARAPKPLENTEAAQAQPSGSKFSPAI. Positions 123–133 are enriched in polar residues; sequence EAAQAQPSGSK.

The protein belongs to the class-II aminoacyl-tRNA synthetase family.

It localises to the cytoplasm. It catalyses the reaction tRNA(Pyl) + L-pyrrolysine + ATP = L-pyrrolysyl-tRNA(Pyl) + AMP + diphosphate. Its function is as follows. Catalyzes the attachment of pyrrolysine to tRNA(Pyl). Pyrrolysine is a lysine derivative encoded by the termination codon UAG. This chain is Pyrrolysine--tRNA ligase, found in Methanosarcina mazei (strain ATCC BAA-159 / DSM 3647 / Goe1 / Go1 / JCM 11833 / OCM 88) (Methanosarcina frisia).